The primary structure comprises 107 residues: Glutaredoxin 4 (107 aa).

Positions L4–H106 constitute a Glutaredoxin domain. Position 21 (K21) interacts with glutathione. C29 contributes to the [2Fe-2S] cluster binding site. Residues R58, F70, and C83 to D84 contribute to the glutathione site.

It belongs to the glutaredoxin family. Monothiol subfamily. In terms of assembly, homodimer.

The protein resides in the cytoplasm. In terms of biological role, monothiol glutaredoxin involved in the biogenesis of iron-sulfur clusters. In Haemophilus influenzae (strain ATCC 51907 / DSM 11121 / KW20 / Rd), this protein is Glutaredoxin 4 (grxD).